The primary structure comprises 395 residues: Long-chain-alcohol dehydrogenase 1 (395 aa).

Residues 98-102 (GSALD) and 141-144 (TTSG) each bind NAD(+).

Belongs to the iron-containing alcohol dehydrogenase family. In terms of assembly, homooctamer.

It catalyses the reaction glycerol + NAD(+) = dihydroxyacetone + NADH + H(+). The catalysed reaction is a long-chain primary fatty alcohol + 2 NAD(+) + H2O = a long-chain fatty acid + 2 NADH + 3 H(+). Functionally, long-chain alkyl alcohol dehydrogenase that can oxidize a broad range of alkyl alcohols from ethanol to 1-triacontanol (C2 to C30) as well as 1,3-propanediol and acetaldehyde. The best substrate is ethanol. Also oxidizes glycerol. This Geobacillus thermodenitrificans (strain NG80-2) protein is Long-chain-alcohol dehydrogenase 1 (adh1).